A 292-amino-acid chain; its full sequence is Probable ABC transporter permease protein PH1215 (292 aa).

6 consecutive transmembrane segments (helical) span residues 10–30, 72–92, 106–126, 160–180, 215–235, and 261–281; these read IILF…FAVV, LLLI…LAIL, IYVL…AWMY, IIIA…LAGI, LSAF…IWVL, and FAYG…VVLP. The region spanning 68 to 284 is the ABC transmembrane type-1 domain; the sequence is LRNNLLLILL…ALVVVLPYLY (217 aa).

The protein belongs to the binding-protein-dependent transport system permease family. MalFG subfamily.

It localises to the cell membrane. In terms of biological role, probably part of a binding-protein-dependent transport system PH1214/15/16. Probably responsible for the translocation of the substrate across the membrane. This is Probable ABC transporter permease protein PH1215 from Pyrococcus horikoshii (strain ATCC 700860 / DSM 12428 / JCM 9974 / NBRC 100139 / OT-3).